The following is a 337-amino-acid chain: 3-isopropylmalate dehydrogenase (337 aa).

Residues arginine 88, arginine 98, arginine 122, and aspartate 212 each contribute to the substrate site. Aspartate 212, aspartate 236, and aspartate 240 together coordinate Mg(2+). 272–284 (GSAPDIAGKGIAD) is an NAD(+) binding site.

It belongs to the isocitrate and isopropylmalate dehydrogenases family. LeuB type 2 subfamily. In terms of assembly, homodimer. Requires Mg(2+) as cofactor. It depends on Mn(2+) as a cofactor.

Its subcellular location is the cytoplasm. It catalyses the reaction (2R,3S)-3-isopropylmalate + NAD(+) = 4-methyl-2-oxopentanoate + CO2 + NADH. It participates in amino-acid biosynthesis; L-leucine biosynthesis; L-leucine from 3-methyl-2-oxobutanoate: step 3/4. Catalyzes the oxidation of 3-carboxy-2-hydroxy-4-methylpentanoate (3-isopropylmalate) to 3-carboxy-4-methyl-2-oxopentanoate. The product decarboxylates to 4-methyl-2 oxopentanoate. The protein is 3-isopropylmalate dehydrogenase of Rhodococcus erythropolis (strain PR4 / NBRC 100887).